We begin with the raw amino-acid sequence, 385 residues long: Succinate--CoA ligase [ADP-forming] subunit beta (385 aa).

The ATP-grasp domain occupies 9–244; sequence KEILRKYGVP…QDEEDPLETR (236 aa). ATP contacts are provided by residues lysine 46, 53-55, glutamate 99, cysteine 102, and glutamate 107; that span reads GRG. Positions 199 and 213 each coordinate Mg(2+). Residues asparagine 264 and 321-323 each bind substrate; that span reads GIM.

This sequence belongs to the succinate/malate CoA ligase beta subunit family. As to quaternary structure, heterotetramer of two alpha and two beta subunits. Requires Mg(2+) as cofactor.

The enzyme catalyses succinate + ATP + CoA = succinyl-CoA + ADP + phosphate. The catalysed reaction is GTP + succinate + CoA = succinyl-CoA + GDP + phosphate. Its pathway is carbohydrate metabolism; tricarboxylic acid cycle; succinate from succinyl-CoA (ligase route): step 1/1. Succinyl-CoA synthetase functions in the citric acid cycle (TCA), coupling the hydrolysis of succinyl-CoA to the synthesis of either ATP or GTP and thus represents the only step of substrate-level phosphorylation in the TCA. The beta subunit provides nucleotide specificity of the enzyme and binds the substrate succinate, while the binding sites for coenzyme A and phosphate are found in the alpha subunit. The sequence is that of Succinate--CoA ligase [ADP-forming] subunit beta from Rickettsia bellii (strain RML369-C).